The following is a 344-amino-acid chain: Centromere protein N (344 aa).

The protein belongs to the CENP-N/CHL4 family.

It is found in the nucleus. The protein localises to the chromosome. The protein resides in the centromere. Functionally, probable component of a centromeric complex involved in assembly of kinetochore proteins, mitotic progression and chromosome segregation. The chain is Centromere protein N (CENPN) from Gallus gallus (Chicken).